Here is a 334-residue protein sequence, read N- to C-terminus: Probable tRNA pseudouridine synthase B (334 aa).

The Nucleophile role is filled by Asp82. The PUA domain maps to 250–325 (LPKVWIRDSA…IAVDVDKVFM (76 aa)).

This sequence belongs to the pseudouridine synthase TruB family. Type 2 subfamily.

The catalysed reaction is uridine(55) in tRNA = pseudouridine(55) in tRNA. Functionally, could be responsible for synthesis of pseudouridine from uracil-55 in the psi GC loop of transfer RNAs. The chain is Probable tRNA pseudouridine synthase B from Thermococcus onnurineus (strain NA1).